A 106-amino-acid polypeptide reads, in one-letter code: MICOS complex subunit MIC12 (106 aa).

The helical transmembrane segment at 11-27 (VKWTLSVGVIGSVFYLY) threads the bilayer.

The protein belongs to the MICOS complex subunit Mic12 family. As to quaternary structure, component of the mitochondrial contact site and cristae organizing system (MICOS) complex.

The protein localises to the mitochondrion inner membrane. Its function is as follows. Component of the MICOS complex, a large protein complex of the mitochondrial inner membrane that plays crucial roles in the maintenance of crista junctions, inner membrane architecture, and formation of contact sites to the outer membrane. In Saccharomyces cerevisiae (strain RM11-1a) (Baker's yeast), this protein is MICOS complex subunit MIC12 (AIM5).